The following is a 356-amino-acid chain: Deoxyribonuclease-2-beta (356 aa).

The N-terminal stretch at 1-22 is a signal peptide; it reads MTAQPLKAALPLLFVALSGVLG. N-linked (GlcNAc...) asparagine glycosylation is found at Asn-77, Asn-98, Asn-114, and Asn-273.

Belongs to the DNase II family. In terms of tissue distribution, liver specific.

The protein localises to the lysosome. It carries out the reaction Endonucleolytic cleavage to nucleoside 3'-phosphates and 3'-phosphooligonucleotide end-products.. Functionally, hydrolyzes DNA under acidic conditions. Does not require divalent cations for activity. Participates in the degradation of nuclear DNA during lens cell differentiation. The sequence is that of Deoxyribonuclease-2-beta (Dnase2b) from Rattus norvegicus (Rat).